A 184-amino-acid polypeptide reads, in one-letter code: F(420)H(2) dehydrogenase subunit B (184 aa).

The tract at residues 1 to 20 is disordered; that stretch reads MGEVKETKTNNSKENPEEEV. Cysteine 61, cysteine 62, cysteine 126, and cysteine 156 together coordinate [4Fe-4S] cluster.

This sequence belongs to the complex I 20 kDa subunit family. In terms of assembly, the FPO complex is composed of at least 13 different subunits. It depends on FAD as a cofactor. [4Fe-4S] cluster is required as a cofactor.

Its subcellular location is the cell inner membrane. It carries out the reaction methanophenazine + reduced coenzyme F420-(gamma-L-Glu)(n) = dihydromethanophenazine + oxidized coenzyme F420-(gamma-L-Glu)(n) + H(+). In terms of biological role, component of the F(420)H(2) dehydrogenase (FPO complex) which is part of the energy-conserving F(420)H(2):heterodisulfide oxidoreductase system. The membrane-bound electron transfer system of the complex plays an important role in the metabolism of methylotrophic methanogens when the organisms grow on methanol or methylamines. Catalyzes the oxidation of methanophenazine to dihydromethanophenazine. It shuttles electrons from F(420)H(2), via FAD and iron-sulfur (Fe-S) centers, to methanophenazine (an electron carrier in the membrane). It couples the redox reaction to proton translocation (for every two electrons transferred, two hydrogen ions are translocated across the cytoplasmic membrane), and thus conserves the redox energy in a proton gradient. It also catalyzes the oxidation of F(420)H(2) with quinones such as 2,3-dimethyl-1,4-naphthoquinone, 2-methyl-1,4-naphthoquinone and tetramethyl-p-benzoquinone. In Methanosarcina mazei (strain ATCC BAA-159 / DSM 3647 / Goe1 / Go1 / JCM 11833 / OCM 88) (Methanosarcina frisia), this protein is F(420)H(2) dehydrogenase subunit B (fpoB).